A 206-amino-acid chain; its full sequence is Superoxide dismutase [Mn] (206 aa).

Mn(2+) contacts are provided by His-27, His-82, Asp-168, and His-172.

This sequence belongs to the iron/manganese superoxide dismutase family. Mn(2+) serves as cofactor.

The catalysed reaction is 2 superoxide + 2 H(+) = H2O2 + O2. Functionally, destroys superoxide anion radicals which are normally produced within the cells and which are toxic to biological systems. In Lactococcus lactis subsp. lactis (strain IL1403) (Streptococcus lactis), this protein is Superoxide dismutase [Mn] (sodA).